The chain runs to 463 residues: Glycine--tRNA ligase (463 aa).

The substrate site is built by arginine 98 and glutamate 174. ATP-binding positions include 206–208, 216–221, 290–291, and 334–337; these read RNE, FRTREF, EL, and GADR. Position 221-225 (221-225) interacts with substrate; it reads FEQME. 330-334 lines the substrate pocket; sequence EPSLG.

It belongs to the class-II aminoacyl-tRNA synthetase family. As to quaternary structure, homodimer.

It is found in the cytoplasm. It carries out the reaction tRNA(Gly) + glycine + ATP = glycyl-tRNA(Gly) + AMP + diphosphate. Functionally, catalyzes the attachment of glycine to tRNA(Gly). The chain is Glycine--tRNA ligase from Staphylococcus haemolyticus (strain JCSC1435).